A 756-amino-acid polypeptide reads, in one-letter code: Xylosyl- and glucuronyltransferase LARGE1 (756 aa).

At 1-10 (MLGICRGRRK) the chain is on the cytoplasmic side. The chain crosses the membrane as a helical; Signal-anchor for type II membrane protein span at residues 11 to 31 (FLAASLTVLFVPAVTWIYLFA). Over 32–756 (GSFEDGKPVS…LKYLTAENNS (725 aa)) the chain is Lumenal. 2 disordered regions span residues 42–63 (LSPL…RDRE) and 81–109 (KQLS…EGTG). Over residues 44 to 58 (PLESQPHSPRYTASS) the composition is skewed to polar residues. The stretch at 55–90 (TASSQRDRESLEVRMREVEEENRVLRKQLSLAQGRS) forms a coiled coil. Asparagine 97, asparagine 122, and asparagine 148 each carry an N-linked (GlcNAc...) asparagine glycan. A xylosyltransferase activity region spans residues 138–413 (IHVAIVCAGY…FLEYDGNLLR (276 aa)). Mn(2+)-binding residues include aspartate 242 and aspartate 244. N-linked (GlcNAc...) asparagine glycosylation occurs at asparagine 272. Residues 414–756 (RELFGCPSEA…LKYLTAENNS (343 aa)) are glucuronyltransferase activity. Residues aspartate 563 and aspartate 565 each coordinate Mn(2+).

It in the C-terminal section; belongs to the glycosyltransferase 49 family. The protein in the N-terminal section; belongs to the glycosyltransferase 8 family. The cofactor is Mn(2+).

It localises to the golgi apparatus membrane. It catalyses the reaction 3-O-[beta-D-GlcA-(1-&gt;3)-beta-D-Xyl-(1-&gt;4)-Rib-ol-P-Rib-ol-P-3-beta-D-GalNAc-(1-&gt;3)-beta-D-GlcNAc-(1-&gt;4)-(O-6-P-alpha-D-Man)]-Thr-[protein] + UDP-alpha-D-xylose = 3-O-[alpha-D-Xyl-(1-&gt;3)-beta-D-GlcA-(1-&gt;4)-beta-D-Xyl-(1-&gt;4)-Rib-ol-P-Rib-ol-P-3-beta-D-GalNAc-(1-&gt;3)-beta-D-GlcNAc-(1-&gt;4)-(O-6-P-alpha-D-Man)]-Thr-[protein] + UDP + H(+). The catalysed reaction is 3-O-{(1-&gt;[3)-alpha-D-Xyl-(1-&gt;3)-beta-D-GlcA-(1-&gt;](n)-4)-beta-D-Xyl-(1-&gt;4)-Rib-ol-P-Rib-ol-P-3-beta-D-GalNAc-(1-&gt;3)-beta-D-GlcNAc-(1-&gt;4)-O-6-P-alpha-D-Man}-L-Thr-[protein] + UDP-alpha-D-glucuronate = 3-O-{beta-D-GlcA-(1-&gt;[3)-alpha-D-Xyl-(1-&gt;3)-beta-D-GlcA-(1-&gt;](n)-4)-beta-D-Xyl-(1-&gt;4)-Rib-ol-P-Rib-ol-P-3-beta-D-GalNAc-(1-&gt;3)-beta-D-GlcNAc-(1-&gt;4)-O-6-P-alpha-D-Man}-L-Thr-[protein] + UDP + H(+). It carries out the reaction 3-O-{beta-D-GlcA-(1-&gt;[3)-alpha-D-Xyl-(1-&gt;3)-beta-D-GlcA-(1-&gt;](n)-4)-beta-D-Xyl-(1-&gt;4)-Rib-ol-P-Rib-ol-P-3-beta-D-GalNAc-(1-&gt;3)-beta-D-GlcNAc-(1-&gt;4)-O-6-P-alpha-D-Man}-L-Thr-[protein] + UDP-alpha-D-xylose = 3-O-{(1-&gt;[3)-alpha-D-Xyl-(1-&gt;3)-beta-D-GlcA-(1-&gt;](n+1)-4)-beta-D-Xyl-(1-&gt;4)-Rib-ol-P-Rib-ol-P-3-beta-D-GalNAc-(1-&gt;3)-beta-D-GlcNAc-(1-&gt;4)-O-6-P-alpha-D-Man}-L-Thr-[protein] + UDP + H(+). The protein operates within protein modification; protein glycosylation. In terms of biological role, bifunctional glycosyltransferase with both alpha-1,3-xylosyltransferase and beta-1,3-glucuronyltransferase activities involved in the maturation of alpha-dystroglycan (DAG1) by glycosylation leading to DAG1 binding to laminin G-like domain-containing extracellular proteins with high affinity. Elongates the glucuronyl-beta-1,4-xylose-beta disaccharide primer structure initiated by B4GAT1 by adding repeating units [-3-Xylose-alpha-1,3-GlcA-beta-1-] to produce a heteropolysaccharide. Requires the phosphorylation of core M3 (O-mannosyl trisaccharide) by POMK to elongate the glucuronyl-beta-1,4-xylose-beta disaccharide primer. Plays a key role in skeletal muscle function and regeneration. The chain is Xylosyl- and glucuronyltransferase LARGE1 from Gallus gallus (Chicken).